The following is a 314-amino-acid chain: Glutathione synthetase (314 aa).

In terms of domain architecture, ATP-grasp spans 125–311 (EKLAAQLFPQ…IAGQLFDAIE (187 aa)). 151-208 (FVQKQEQAILKPLDGMGGHSIFRSSNGDPNLNVILETLTDGGRTLAIAQRYLQQIIEG) serves as a coordination point for ATP. Mg(2+) is bound by residues Glu-282 and Asn-284.

It belongs to the prokaryotic GSH synthase family. Mg(2+) is required as a cofactor. Mn(2+) serves as cofactor.

It catalyses the reaction gamma-L-glutamyl-L-cysteine + glycine + ATP = glutathione + ADP + phosphate + H(+). Its pathway is sulfur metabolism; glutathione biosynthesis; glutathione from L-cysteine and L-glutamate: step 2/2. The polypeptide is Glutathione synthetase (Xylella fastidiosa (strain 9a5c)).